The sequence spans 77 residues: Large ribosomal subunit protein bL28 (77 aa).

Belongs to the bacterial ribosomal protein bL28 family.

This chain is Large ribosomal subunit protein bL28, found in Ralstonia nicotianae (strain ATCC BAA-1114 / GMI1000) (Ralstonia solanacearum).